The sequence spans 576 residues: (+)-alpha-terpineol synthase (576 aa).

Residues arginine 286, aspartate 323, aspartate 327, arginine 466, and asparagine 469 each coordinate (2E)-geranyl diphosphate. Residues aspartate 323 and aspartate 327 each contribute to the Mg(2+) site. The short motif at 323–327 is the DDXXD motif element; that stretch reads DDVYD. Residues asparagine 469, threonine 473, and glutamate 477 each contribute to the Mg(2+) site.

This sequence belongs to the terpene synthase family. Tpsb subfamily. It depends on Mg(2+) as a cofactor. Mn(2+) is required as a cofactor.

The enzyme catalyses (2E)-geranyl diphosphate + H2O = (R)-alpha-terpineol + diphosphate. Monoterpene synthase producing mainly (+)-alpha-terpineol (44%) and (-)-limonene (33.6%) and lower amounts of (E)-geraniol (5.9%), linalool (5.0%), myrcene (3.4%), (-)-alpha-pinene (3.3%), (+)-sabinene (3.0%) and alpha-terpinolene (1.6%). This is (+)-alpha-terpineol synthase from Santalum album (White sandalwood).